A 490-amino-acid chain; its full sequence is Xylulose kinase (490 aa).

Positions 99, 170, 280, and 281 each coordinate substrate. ATP is bound by residues W355, 441 to 442 (GA), and N445.

Belongs to the FGGY kinase family. As to quaternary structure, monomer.

It carries out the reaction D-xylulose + ATP = D-xylulose 5-phosphate + ADP + H(+). In terms of biological role, phosphorylates D-xylulose to produce D-xylulose 5-phosphate, a molecule that may play an important role in the regulation of glucose metabolism and lipogenesis. The sequence is that of Xylulose kinase (XYLB) from Bos taurus (Bovine).